The primary structure comprises 428 residues: MLDPKFLRTELEATAERLATRGFILDVDRLSKLEEKRKSLQVATEELQASRNAISKSIGQAKAKGEDVAPIMAKVGDLGAELSSKEAELKQLLEELNAIAMSVPNLPDESAPIGADENDNVEIRRWGEPKQFDFDVKDHVDLGEQHAGLDFKSAVKITGSRFIVMKGQIARMHRALTQFMLDLHTTEHGYTETYVPLLVNEDSLLGTGQLPKFGEDLFHTKPATEEGQGLSLIPTAEVPLTNLARDTIIDEDELPIKMTAHTACFRSEAGSYGRDTRGLIRQHQFDKVELVQLVKPEDSMAALESLTQHAETVLQRLGLPYRTVVLCTGDMGFGAAKTFDIEVWLPAQNTYREISSCSNMQDFQARRMQARYKAKSAKKPALLHTLNGSGLAVGRTLVAVLENYQNADGSITVPEALRPYMGGLTQIG.

235–237 (TAE) lines the L-serine pocket. 266 to 268 (RSE) is a binding site for ATP. Glu-289 is a binding site for L-serine. Residue 353 to 356 (EISS) participates in ATP binding. Ser-389 contributes to the L-serine binding site.

The protein belongs to the class-II aminoacyl-tRNA synthetase family. Type-1 seryl-tRNA synthetase subfamily. In terms of assembly, homodimer. The tRNA molecule binds across the dimer.

The protein resides in the cytoplasm. It carries out the reaction tRNA(Ser) + L-serine + ATP = L-seryl-tRNA(Ser) + AMP + diphosphate + H(+). The enzyme catalyses tRNA(Sec) + L-serine + ATP = L-seryl-tRNA(Sec) + AMP + diphosphate + H(+). Its pathway is aminoacyl-tRNA biosynthesis; selenocysteinyl-tRNA(Sec) biosynthesis; L-seryl-tRNA(Sec) from L-serine and tRNA(Sec): step 1/1. Catalyzes the attachment of serine to tRNA(Ser). Is also able to aminoacylate tRNA(Sec) with serine, to form the misacylated tRNA L-seryl-tRNA(Sec), which will be further converted into selenocysteinyl-tRNA(Sec). The sequence is that of Serine--tRNA ligase from Shewanella loihica (strain ATCC BAA-1088 / PV-4).